The primary structure comprises 260 residues: Taurine import ATP-binding protein TauB (260 aa).

Residues 6-235 enclose the ABC transporter domain; that stretch reads AQQVSVVYAS…RYAHGEPVRS (230 aa). Position 40–47 (40–47) interacts with ATP; the sequence is GASGCGKS.

It belongs to the ABC transporter superfamily. Taurine importer (TC 3.A.1.17.1) family. The complex is composed of two ATP-binding proteins (TauB), two transmembrane proteins (TauC) and a solute-binding protein (TauA).

It localises to the cell inner membrane. It carries out the reaction taurine(out) + ATP + H2O = taurine(in) + ADP + phosphate + H(+). In terms of biological role, part of the ABC transporter complex TauABC involved in taurine import. Responsible for energy coupling to the transport system. The chain is Taurine import ATP-binding protein TauB from Burkholderia pseudomallei (strain K96243).